The following is a 311-amino-acid chain: Heme A synthase (311 aa).

Over 1-6 (MQRFIK) the chain is Cytoplasmic. Residues 7–27 (WLAVITSLDLLIVLLGGALVT) form a helical membrane-spanning segment. At 28-62 (KTGSGQGCGKSWPLCNGEFVPSNLSMETIIELSHR) the chain is on the extracellular side. A disulfide bond links Cys-35 and Cys-42. Residue Glu-58 is part of the active site. His-61 serves as a coordination point for heme o. The helical transmembrane segment at 63-83 (LTSGSAGILVTLLCILSWKYY) threads the bilayer. Over 84 to 91 (KHVRETKT) the chain is Cytoplasmic. The chain crosses the membrane as a helical span at residues 92-112 (LAILSFVFLVAQALMGAAAVV). Residues 113-121 (WGQMPAVLA) are Extracellular-facing. The helical transmembrane segment at 122 to 142 (IHFGISLISFASVILLTCLIF) threads the bilayer. His-123 is a heme o binding site. The Cytoplasmic segment spans residues 143–159 (EIDQKFDARSLIMDKKM). Residues 160–180 (KFHIYGVTIYSYIVVYTGALV) traverse the membrane as a helical segment. Over 181-211 (RHERASLACPDFPLCSKNRPMPTQLHEWVQM) the chain is Extracellular. A disulfide bridge links Cys-189 with Cys-195. A helical membrane pass occupies residues 212 to 232 (GHRVAAMLIFAWILYAMILAI). His-213 provides a ligand contact to heme b. Over 233-243 (RHYKQQPVVYW) the chain is Cytoplasmic. The helical transmembrane segment at 244 to 264 (GWIISFILVTLQAVVGVLVVF) threads the bilayer. The Extracellular segment spans residues 265 to 271 (TNASLAM). The chain crosses the membrane as a helical span at residues 272-292 (ALLHSLFISCLFAVLCYLVML). Position 275 (His-275) interacts with heme b. Residues 293–311 (GTRIKVNAKEAGSTSKQTK) lie on the Cytoplasmic side of the membrane.

This sequence belongs to the COX15/CtaA family. Type 1 subfamily. Interacts with CtaB. The cofactor is heme b.

It is found in the cell membrane. The enzyme catalyses Fe(II)-heme o + 2 A + H2O = Fe(II)-heme a + 2 AH2. It participates in porphyrin-containing compound metabolism; heme A biosynthesis; heme A from heme O: step 1/1. Its function is as follows. Catalyzes the conversion of heme O to heme A by two successive hydroxylations of the methyl group at C8. The first hydroxylation forms heme I, the second hydroxylation results in an unstable dihydroxymethyl group, which spontaneously dehydrates, resulting in the formyl group of heme A. The sequence is that of Heme A synthase from Bacillus cereus (strain G9842).